An 80-amino-acid chain; its full sequence is uncharacterized protein (80 aa).

A run of 2 helical transmembrane segments spans residues 15–35 (ALGL…LSGV) and 45–65 (WFEM…WAMV).

The protein to H.influenzae HI_0974B.

It is found in the cell membrane. This is an uncharacterized protein from Escherichia coli (strain K12).